An 814-amino-acid polypeptide reads, in one-letter code: Spore development regulator umv1 (814 aa).

6 disordered regions span residues 1 to 36 (MSRP…GSTE), 96 to 134 (HDRP…VRRG), 267 to 333 (QGLK…MPRS), 407 to 441 (PPRD…RAGP), 457 to 501 (PVRS…ASLT), and 539 to 814 (QSSG…NQPY). Polar residues predominate over residues 7–18 (RSGNASTPQGTS). The region spanning 53 to 274 (RDHIEYQLTV…AEQGLKVRVR (222 aa)) is the Velvet domain. Residues 271–285 (VRVRKHPRSRRRGSK) show a composition bias toward basic residues. Basic and acidic residues predominate over residues 407–423 (PPRDFADGRYMDGDYPP). Residues 438 to 445 (RAGPSEYS) carry the Nuclear localization signal motif. Residues 620–631 (AAARRSPIPSAR) are compositionally biased toward low complexity. 2 stretches are compositionally biased toward basic and acidic residues: residues 723–741 (TRDR…DRDQ) and 760–796 (GELD…RRDF). Over residues 800 to 814 (TMPSKPSSRGHNQPY) the composition is skewed to polar residues.

The protein belongs to the velvet family. VosA subfamily. As to quaternary structure, forms a heterodimeric complex with velB; the formation of the VEL2-VOS1 complex is light-dependent.

It is found in the nucleus. Component of the velB-VosA heterodimeric complex that plays a dual role in activating genes associated with spore maturation and repressing certain development-associated genes. The complex binds DNA through the DNA-binding domain of vosA that recognizes an 11-nucleotide consensus sequence 5'-CTGGCCGCGGC-3' consisting of two motifs in the promoters of key developmental regulatory genes. Required for gall induction and teliospore formation on seedlings. The chain is Spore development regulator umv1 from Mycosarcoma maydis (Corn smut fungus).